The chain runs to 891 residues: Alanine--tRNA ligase (891 aa).

Positions 564, 568, 678, and 682 each coordinate Zn(2+).

This sequence belongs to the class-II aminoacyl-tRNA synthetase family. Zn(2+) is required as a cofactor.

It localises to the cytoplasm. The enzyme catalyses tRNA(Ala) + L-alanine + ATP = L-alanyl-tRNA(Ala) + AMP + diphosphate. Catalyzes the attachment of alanine to tRNA(Ala) in a two-step reaction: alanine is first activated by ATP to form Ala-AMP and then transferred to the acceptor end of tRNA(Ala). Also edits incorrectly charged Ser-tRNA(Ala) and Gly-tRNA(Ala) via its editing domain. This chain is Alanine--tRNA ligase, found in Nitrobacter winogradskyi (strain ATCC 25391 / DSM 10237 / CIP 104748 / NCIMB 11846 / Nb-255).